A 152-amino-acid chain; its full sequence is Deoxyuridine 5'-triphosphate nucleotidohydrolase (152 aa).

Substrate-binding positions include 71–73 (RSG), asparagine 84, 88–90 (LID), and methionine 98.

It belongs to the dUTPase family. Mg(2+) is required as a cofactor.

The catalysed reaction is dUTP + H2O = dUMP + diphosphate + H(+). It participates in pyrimidine metabolism; dUMP biosynthesis; dUMP from dCTP (dUTP route): step 2/2. Its function is as follows. This enzyme is involved in nucleotide metabolism: it produces dUMP, the immediate precursor of thymidine nucleotides and it decreases the intracellular concentration of dUTP so that uracil cannot be incorporated into DNA. The polypeptide is Deoxyuridine 5'-triphosphate nucleotidohydrolase (Shewanella sp. (strain MR-7)).